Consider the following 208-residue polypeptide: Small ribosomal subunit protein uS4 (208 aa).

Positions 30–49 are disordered; it reads EKRPYAPGEHGRDRRRTESD. One can recognise an S4 RNA-binding domain in the interval 95–161; it reads TRLDNLVLRA…VPFQIAAEGV (67 aa).

This sequence belongs to the universal ribosomal protein uS4 family. In terms of assembly, part of the 30S ribosomal subunit. Contacts protein S5. The interaction surface between S4 and S5 is involved in control of translational fidelity.

One of the primary rRNA binding proteins, it binds directly to 16S rRNA where it nucleates assembly of the body of the 30S subunit. In terms of biological role, with S5 and S12 plays an important role in translational accuracy. This Bifidobacterium longum (strain DJO10A) protein is Small ribosomal subunit protein uS4.